The sequence spans 458 residues: Forkhead box protein J1-A (458 aa).

Over residues 68-78 (TGQHTSPSSHS) the composition is skewed to polar residues. The disordered stretch occupies residues 68-99 (TGQHTSPSSHSHLMGSDAPSSPLAGDPASIGM). Residues 142 to 236 (KPPYSYATLI…LNGAYKKRRL (95 aa)) constitute a DNA-binding region (fork-head). Over residues 305 to 321 (TNKRKQPYNHRTGKTPR) the composition is skewed to basic residues. The interval 305 to 324 (TNKRKQPYNHRTGKTPRRSS) is disordered.

It belongs to the FOXJ1 family. Expressed in floor plate, dorsal forerunner cells, Kupffers vesicle, the floor plate, pronephric ducts and kidney.

It is found in the nucleus. Key transcription factor required for motile ciliogenesis. Activates genes essential for motile cilia formation and function. Its activity is sufficient for ectopic development of cilia that resemble motile cilia. This is Forkhead box protein J1-A from Danio rerio (Zebrafish).